The chain runs to 466 residues: Glycine--tRNA ligase (466 aa).

Positions 105 and 168 each coordinate substrate. ATP is bound by residues 200 to 202, 210 to 215, 287 to 288, and 331 to 334; these read RNE, FRTREF, EL, and GLTR. 215-219 contributes to the substrate binding site; the sequence is FEQME. 327 to 331 serves as a coordination point for substrate; it reads EPAAG.

It belongs to the class-II aminoacyl-tRNA synthetase family. As to quaternary structure, homodimer.

It is found in the cytoplasm. The enzyme catalyses tRNA(Gly) + glycine + ATP = glycyl-tRNA(Gly) + AMP + diphosphate. Functionally, catalyzes the attachment of glycine to tRNA(Gly). This is Glycine--tRNA ligase from Nocardia farcinica (strain IFM 10152).